The sequence spans 270 residues: NAD kinase (270 aa).

Residue Asp63 is the Proton acceptor of the active site. NAD(+) is bound by residues 63 to 64 (DG), 131 to 132 (NE), Lys142, Arg159, Asp161, 172 to 177 (TAYAMS), Ala196, and Gln230.

Belongs to the NAD kinase family. A divalent metal cation serves as cofactor.

Its subcellular location is the cytoplasm. The catalysed reaction is NAD(+) + ATP = ADP + NADP(+) + H(+). Its function is as follows. Involved in the regulation of the intracellular balance of NAD and NADP, and is a key enzyme in the biosynthesis of NADP. Catalyzes specifically the phosphorylation on 2'-hydroxyl of the adenosine moiety of NAD to yield NADP. This Methanoculleus marisnigri (strain ATCC 35101 / DSM 1498 / JR1) protein is NAD kinase.